Here is a 177-residue protein sequence, read N- to C-terminus: Ribonuclease H (177 aa).

The 142-residue stretch at 1-142 (MSKQVEIFTD…ADELAREGMA (142 aa)) folds into the RNase H type-1 domain. Positions 10, 48, 70, and 134 each coordinate Mg(2+). Residues 126–138 (GHTENERADELAR) show a composition bias toward basic and acidic residues. The tract at residues 126 to 177 (GHTENERADELAREGMAPFKKGSFKPAASAPKPDAQLKQPVATKARRSTQSY) is disordered.

Belongs to the RNase H family. In terms of assembly, monomer. Requires Mg(2+) as cofactor.

The protein localises to the cytoplasm. It carries out the reaction Endonucleolytic cleavage to 5'-phosphomonoester.. Functionally, endonuclease that specifically degrades the RNA of RNA-DNA hybrids. The sequence is that of Ribonuclease H from Mesorhizobium japonicum (strain LMG 29417 / CECT 9101 / MAFF 303099) (Mesorhizobium loti (strain MAFF 303099)).